A 283-amino-acid chain; its full sequence is Pantothenate synthetase (283 aa).

30–37 (MGYFHDGH) lines the ATP pocket. Histidine 37 functions as the Proton donor in the catalytic mechanism. Glutamine 61 provides a ligand contact to (R)-pantoate. Glutamine 61 contacts beta-alanine. Residue 147–150 (GSKD) coordinates ATP. Residue glutamine 153 coordinates (R)-pantoate. ATP-binding positions include valine 176 and 184 to 187 (MSSR).

It belongs to the pantothenate synthetase family. In terms of assembly, homodimer.

It localises to the cytoplasm. The catalysed reaction is (R)-pantoate + beta-alanine + ATP = (R)-pantothenate + AMP + diphosphate + H(+). It participates in cofactor biosynthesis; (R)-pantothenate biosynthesis; (R)-pantothenate from (R)-pantoate and beta-alanine: step 1/1. Catalyzes the condensation of pantoate with beta-alanine in an ATP-dependent reaction via a pantoyl-adenylate intermediate. The protein is Pantothenate synthetase of Desulforapulum autotrophicum (strain ATCC 43914 / DSM 3382 / VKM B-1955 / HRM2) (Desulfobacterium autotrophicum).